A 146-amino-acid chain; its full sequence is Large ribosomal subunit protein uL15 (146 aa).

Over residues 1-13 the composition is skewed to basic and acidic residues; sequence MKLHELKPAEGSR. A disordered region spans residues 1–48; sequence MKLHELKPAEGSRKVRNRVGRGIGSGNGKTAGKGHKGQNARSGGGVRL. Residues 21-31 show a composition bias toward gly residues; the sequence is RGIGSGNGKTA.

The protein belongs to the universal ribosomal protein uL15 family. In terms of assembly, part of the 50S ribosomal subunit.

In terms of biological role, binds to the 23S rRNA. This Bacillus cytotoxicus (strain DSM 22905 / CIP 110041 / 391-98 / NVH 391-98) protein is Large ribosomal subunit protein uL15.